The primary structure comprises 508 residues: Photosystem II CP47 reaction center protein (508 aa).

The next 6 helical transmembrane spans lie at 21-36 (AVHL…WAGS), 101-115 (IVLS…VWHW), 140-156 (GIHL…FGAF), 203-218 (IAAG…FHLT), 237-252 (VLSS…AFVV), and 457-472 (SFAL…HGSR).

The protein belongs to the PsbB/PsbC family. PsbB subfamily. As to quaternary structure, PSII is composed of 1 copy each of membrane proteins PsbA, PsbB, PsbC, PsbD, PsbE, PsbF, PsbH, PsbI, PsbJ, PsbK, PsbL, PsbM, PsbT, PsbX, PsbY, PsbZ, Psb30/Ycf12, peripheral proteins PsbO, CyanoQ (PsbQ), PsbU, PsbV and a large number of cofactors. It forms dimeric complexes. Binds multiple chlorophylls. PSII binds additional chlorophylls, carotenoids and specific lipids. serves as cofactor.

The protein localises to the cellular thylakoid membrane. Its function is as follows. One of the components of the core complex of photosystem II (PSII). It binds chlorophyll and helps catalyze the primary light-induced photochemical processes of PSII. PSII is a light-driven water:plastoquinone oxidoreductase, using light energy to abstract electrons from H(2)O, generating O(2) and a proton gradient subsequently used for ATP formation. This chain is Photosystem II CP47 reaction center protein, found in Synechococcus elongatus (strain ATCC 33912 / PCC 7942 / FACHB-805) (Anacystis nidulans R2).